Consider the following 484-residue polypeptide: Neuronal acetylcholine receptor subunit alpha-9 (484 aa).

Positions 1 to 27 (MKRNNLSSFYVSLWLLFTATMLQAVES) are cleaved as a signal peptide. The Extracellular segment spans residues 28 to 240 (AKGKYAQMLF…FTLILKRKSS (213 aa)). Asn59 carries an N-linked (GlcNAc...) asparagine glycan. A disulfide bridge connects residues Cys157 and Cys171. Asn172 is a glycosylation site (N-linked (GlcNAc...) asparagine). Na(+) contacts are provided by Ser193 and Asp195. A disulfide bridge links Cys221 with Cys222. The next 3 helical transmembrane spans lie at 241 to 261 (FYIF…PLGF), 271 to 291 (VSLG…VAEI), and 305 to 325 (YIAT…IMNV). Topologically, residues 326–462 (HHCGSEAKPV…WKKVAKVMDR (137 aa)) are cytoplasmic. The interval 364-395 (RREKEQEHRLEGGDMCRGGDGKSHLSSRNDDS) is disordered. Residues 463–483 (FFMWIFFIMVFFMSVLIIGKA) traverse the membrane as a helical segment.

Belongs to the ligand-gated ion channel (TC 1.A.9) family. Acetylcholine receptor (TC 1.A.9.1) subfamily. Alpha-9/CHRNA9 sub-subfamily. Forms homo- or heteropentameric channels in conjunction with CHRNA10. The native outer hair cell receptor is composed of CHRNA9:CHRNA10 heterooligomers. Found in the stoichiometric form (CHRNA9)2:(CHRNA10)3. In terms of tissue distribution, expressed in hair cells of the cochlea (at protein level). Expressed in hair cells of the cochlea.

Its subcellular location is the synaptic cell membrane. The protein localises to the cell membrane. The enzyme catalyses Ca(2+)(in) = Ca(2+)(out). It carries out the reaction K(+)(in) = K(+)(out). It catalyses the reaction Na(+)(in) = Na(+)(out). The catalysed reaction is Mg(2+)(in) = Mg(2+)(out). With respect to regulation, activated by a myriad of ligands such as acetylcholine. AChR activity is inhibited by the antagonist alpha-conotoxins RgIA and GeXXA, small disulfide-constrained peptides from cone snails. Functionally, component of neuronal acetylcholine receptors (nAChRs) that function as pentameric, ligand-gated cation channels with high calcium permeability among other activities. nAChRs are excitatory neurotrasnmitter receptors formed by a collection of nAChR subunits known to mediate synaptic transmission in the nervous system and the neuromuscular junction. Each nAchR subunit confers differential attributes to channel properties, including activation, deactivation and desensitization kinetics, pH sensitivity, cation permeability, and binding to allosteric modulators. Forms either homopentamers or heteropentamers with CHRNA10. Expressed in the inner ear, in sympathetic neurons and in other non-neuronal cells, such as skin keratinocytes and lymphocytes. The channel is permeable to a range of divalent cations including calcium, the influx of which may activate a potassium current which hyperpolarizes the cell membrane. This Gallus gallus (Chicken) protein is Neuronal acetylcholine receptor subunit alpha-9 (CHRNA9).